A 321-amino-acid chain; its full sequence is Manganese-dependent ADP-ribose/CDP-alcohol diphosphatase (321 aa).

Zn(2+)-binding residues include D25, Q27, D72, N107, H226, H263, and H265.

Belongs to the ADPRibase-Mn family. As to quaternary structure, monomer. Mg(2+) serves as cofactor.

It carries out the reaction CDP-choline + H2O = phosphocholine + CMP + 2 H(+). The catalysed reaction is ADP-D-ribose + H2O = D-ribose 5-phosphate + AMP + 2 H(+). It catalyses the reaction CDP-glycerol + H2O = sn-glycerol 3-phosphate + CMP + 2 H(+). In terms of biological role, hydrolyzes ADP-ribose, IDP-ribose, CDP-glycerol, CDP-choline and CDP-ethanolamine, but not other non-reducing ADP-sugars or CDP-glucose. This chain is Manganese-dependent ADP-ribose/CDP-alcohol diphosphatase, found in Oryza sativa subsp. japonica (Rice).